A 62-amino-acid chain; its full sequence is Potassium channel toxin alpha-KTx Tx790 (62 aa).

Positions 1-18 (MQKLFIVLVLFCILRLDA) are cleaved as a signal peptide. Intrachain disulfides connect Cys28/Cys46, Cys33/Cys59, and Cys37/Cys61.

It belongs to the short scorpion toxin superfamily. Potassium channel inhibitor family. Alpha-KTx 23 subfamily. In terms of tissue distribution, expressed by the venom gland.

The protein localises to the secreted. May block potassium channels. This chain is Potassium channel toxin alpha-KTx Tx790, found in Buthus israelis (Israeli scorpion).